A 660-amino-acid polypeptide reads, in one-letter code: UvrABC system protein B (660 aa).

The 154-residue stretch at 24 to 177 folds into the Helicase ATP-binding domain; sequence KGFKEGNQFE…DDLARALIDL (154 aa). 37 to 44 serves as a coordination point for ATP; the sequence is GVTGSGKT. The short motif at 90–113 is the Beta-hairpin element; that stretch reads YYDYYQPEAYVPQSDTYIAKDSSV. Residues 428–594 form the Helicase C-terminal domain; it reads QIDDLVSEVN…TIQKSVRDLI (167 aa). The UVR domain maps to 620–655; that stretch reads EKHIADIEKKMKKAAAELNFEAAAEYRDKLIMLKNT.

Belongs to the UvrB family. As to quaternary structure, forms a heterotetramer with UvrA during the search for lesions. Interacts with UvrC in an incision complex.

It is found in the cytoplasm. Functionally, the UvrABC repair system catalyzes the recognition and processing of DNA lesions. A damage recognition complex composed of 2 UvrA and 2 UvrB subunits scans DNA for abnormalities. Upon binding of the UvrA(2)B(2) complex to a putative damaged site, the DNA wraps around one UvrB monomer. DNA wrap is dependent on ATP binding by UvrB and probably causes local melting of the DNA helix, facilitating insertion of UvrB beta-hairpin between the DNA strands. Then UvrB probes one DNA strand for the presence of a lesion. If a lesion is found the UvrA subunits dissociate and the UvrB-DNA preincision complex is formed. This complex is subsequently bound by UvrC and the second UvrB is released. If no lesion is found, the DNA wraps around the other UvrB subunit that will check the other stand for damage. This chain is UvrABC system protein B, found in Agathobacter rectalis (strain ATCC 33656 / DSM 3377 / JCM 17463 / KCTC 5835 / VPI 0990) (Eubacterium rectale).